A 425-amino-acid chain; its full sequence is Adenosine 3'-phospho 5'-phosphosulfate transporter 1 (425 aa).

The next 9 helical transmembrane spans lie at 27-47 (FLIL…IYYV), 102-122 (VIIL…AMGV), 147-167 (TQFL…MILA), 232-252 (YSWF…LFLL), 263-283 (ITYT…FDAF), 303-323 (MMFG…IEQG), 342-360 (VFLL…YSTI), 365-387 (PIVF…TIMY), and 391-411 (LTFL…VDIH).

It belongs to the nucleotide-sugar transporter family. SLC35B subfamily.

The protein resides in the golgi apparatus membrane. Its function is as follows. Mediates the transport of adenosine 3'-phospho 5'-phosphosulfate (PAPS), from cytosol into Golgi. PAPS is a universal sulfuryl donor for sulfation events that take place in the Golgi. This chain is Adenosine 3'-phospho 5'-phosphosulfate transporter 1 (pst-1), found in Caenorhabditis elegans.